We begin with the raw amino-acid sequence, 214 residues long: Redox-sensing transcriptional repressor Rex (214 aa).

The segment at residues L18–F57 is a DNA-binding region (H-T-H motif). G92–G97 contributes to the NAD(+) binding site.

The protein belongs to the transcriptional regulatory Rex family. Homodimer.

It localises to the cytoplasm. Its function is as follows. Modulates transcription in response to changes in cellular NADH/NAD(+) redox state. The protein is Redox-sensing transcriptional repressor Rex of Staphylococcus carnosus (strain TM300).